The sequence spans 220 residues: Uracil-DNA glycosylase (220 aa).

The active-site Proton acceptor is Asp60.

It belongs to the uracil-DNA glycosylase (UDG) superfamily. UNG family.

Its subcellular location is the cytoplasm. It carries out the reaction Hydrolyzes single-stranded DNA or mismatched double-stranded DNA and polynucleotides, releasing free uracil.. Functionally, excises uracil residues from the DNA which can arise as a result of misincorporation of dUMP residues by DNA polymerase or due to deamination of cytosine. This chain is Uracil-DNA glycosylase, found in Francisella tularensis subsp. holarctica (strain FTNF002-00 / FTA).